We begin with the raw amino-acid sequence, 315 residues long: Malate dehydrogenase (315 aa).

Residues 10–15 (GSGFTG) and Asp-34 contribute to the NAD(+) site. Arg-85 and Arg-91 together coordinate substrate. Residues Asn-98 and 121 to 123 (LTN) contribute to the NAD(+) site. The substrate site is built by Asn-123 and Arg-154. Residue His-178 is the Proton acceptor of the active site.

This sequence belongs to the LDH/MDH superfamily. MDH type 3 family.

The catalysed reaction is (S)-malate + NAD(+) = oxaloacetate + NADH + H(+). Functionally, catalyzes the reversible oxidation of malate to oxaloacetate. This Symbiobacterium thermophilum (strain DSM 24528 / JCM 14929 / IAM 14863 / T) protein is Malate dehydrogenase.